The primary structure comprises 678 residues: MTPNEFFSIKYHILAKAELKAYIDKLADYLSQQSYLYHTLDKPIISDSDYDKLFRLLQDLVNDNPQFKPINSVLDRVGGEVLAGFETIKHKKKMTSLANVFSLEELRDFYDKIEYDIELECEPKMDGLAISIFYKNGKFDYAVTRGDGIQGEKVSENVKTIRNVPLKLNTSNPPEELEVRGEIILDKQSFLSLNEYMQTHENKTFANPRNAAAGSIRMLDSKVVAKRPLKLYSYGIGYFSKDFVYPETQFELMQLLQSFGFTISDNMFLAKNFSEVEEYHHKMSHQRADLAYDIDGLVFKINNIKLQDTIGYTARGPKWAIAYKFPAEEVESEVLNVEFQVGRTGAITPVARLKPVAVGGVIVSNATLHNINEIKRKDIRVGDRVIVRRAGDVIPEVVKSLPQYRKSDAQIVEMPTNCPVCDSKIENVNDQAIYRCTGGWHCQAQTTERLKHFVSRKAMDIDKLGAKLIEQLVAANLIKYPADIYKLNFEQLTGLERMAAKSSQNVLDSITKSKEPSLARFIFAIGIKDIGEVSSDALANHFGSLESFRDAKFEELIEINYIGEIIANNIVSFWHDSLNIKIVEEFLAIGIKIQNPVKVEHAYNESFTGKTVVITGSFENYGRTELTQLLKSIGAKVTSSVSKKTDMVICGDNAGSKLTKAQELGVEVILEDNLKDLL.

NAD(+) is bound by residues 47-51 (DSDYD), 96-97 (SL), and E122. The active-site N6-AMP-lysine intermediate is K124. NAD(+)-binding residues include R145, E182, K300, and K324. C418, C421, C436, and C442 together coordinate Zn(2+). The BRCT domain occupies 602-678 (AYNESFTGKT…ILEDNLKDLL (77 aa)).

The protein belongs to the NAD-dependent DNA ligase family. LigA subfamily. The cofactor is Mg(2+). Requires Mn(2+) as cofactor.

It catalyses the reaction NAD(+) + (deoxyribonucleotide)n-3'-hydroxyl + 5'-phospho-(deoxyribonucleotide)m = (deoxyribonucleotide)n+m + AMP + beta-nicotinamide D-nucleotide.. Functionally, DNA ligase that catalyzes the formation of phosphodiester linkages between 5'-phosphoryl and 3'-hydroxyl groups in double-stranded DNA using NAD as a coenzyme and as the energy source for the reaction. It is essential for DNA replication and repair of damaged DNA. This Francisella tularensis subsp. holarctica (strain FTNF002-00 / FTA) protein is DNA ligase.